Consider the following 1025-residue polypeptide: Dihydropyrimidine dehydrogenase [NADP(+)] (1025 aa).

A 4Fe-4S ferredoxin-type 1 domain is found at 69–100 (ERGALREAMRCLKCADAPCQKSCPTNLDIKSF). Positions 79, 82, 87, and 91 each coordinate [4Fe-4S] cluster. Val129 contributes to the FAD binding site. Cys130, Cys136, Cys140, and Gln156 together coordinate [4Fe-4S] cluster. Residues 194–198 (GAGPA), 218–226 (EKQEYVGGI), Arg235, and Leu261 each bind FAD. NADP(+) contacts are provided by residues 340 to 343 (AGDT), 364 to 365 (RK), and Arg371. Lys384 carries the post-translational modification N6-acetyllysine. Residues 437-439 (AFG) and 481-487 (DVVGIAN) contribute to the NADP(+) site. FAD is bound at residue 480–489 (GDVVGIANTT). FMN is bound by residues Ser550 and 574–575 (KT). Substrate-binding positions include Asn609 and 668-670 (NLS). Catalysis depends on Cys671, which acts as the Proton acceptor. Position 709 (Lys709) interacts with FMN. 736-737 (NT) contacts substrate. Residues Gly767, 793–795 (TGG), and 816–817 (CS) each bind FMN. 2 consecutive 4Fe-4S ferredoxin-type domains span residues 944 to 976 (VVAV…FDPE) and 978 to 1007 (HLPT…MVSR). [4Fe-4S] cluster-binding residues include Cys953, Cys956, Cys959, Cys963, Cys986, Cys989, Cys992, and Cys996.

It belongs to the dihydropyrimidine dehydrogenase family. Homodimer. FAD serves as cofactor. Requires FMN as cofactor. It depends on [4Fe-4S] cluster as a cofactor.

It is found in the cytoplasm. The enzyme catalyses 5,6-dihydrouracil + NADP(+) = uracil + NADPH + H(+). It carries out the reaction 5,6-dihydrothymine + NADP(+) = thymine + NADPH + H(+). It participates in amino-acid biosynthesis; beta-alanine biosynthesis. Its activity is regulated as follows. Inactivated by 5-iodouracil. Involved in pyrimidine base degradation. Catalyzes the reduction of uracil and thymine. Also involved the degradation of the chemotherapeutic drug 5-fluorouracil. This is Dihydropyrimidine dehydrogenase [NADP(+)] (DPYD) from Bos taurus (Bovine).